A 355-amino-acid polypeptide reads, in one-letter code: 3'-5' exonuclease (355 aa).

Positions 1–121 are disordered; that stretch reads MDKYLIKLPN…PSPEKEKPEK (121 aa). 3 stretches are compositionally biased toward basic and acidic residues: residues 17 to 29, 36 to 50, and 72 to 92; these read VSDKKEVVKKETP, AKKDTPKQEKEKENT, and KNLDTPEVTQEKESVESENPP. A phosphoserine mark is found at S105 and S113. A 3'-5' exonuclease domain is found at 147-315; the sequence is VMQWVEKQKE…GQVIYRDLEQ (169 aa). D164, E166, and D302 together coordinate Mg(2+).

The protein belongs to the WRNexo family.

Its subcellular location is the nucleus. In terms of biological role, has exonuclease activity on both single-stranded and duplex templates bearing overhangs, but not blunt ended duplex DNA, and cleaves in a 3'-5' direction. Essential for the formation of DNA replication focal centers. Has an important role in maintaining genome stability. The sequence is that of 3'-5' exonuclease from Drosophila ananassae (Fruit fly).